We begin with the raw amino-acid sequence, 28 residues long: U15-ctenitoxin-Co1a (28 aa).

Disulfide bonds link Cys3–Cys17 and Cys10–Cys22.

Expressed by the venom gland.

It is found in the secreted. Functionally, insecticidal neurotoxin that reversibly inhibits the N-methyl-D-aspartate (NMDA)-subtype of ionotropic glutamate receptor (GRIN) and inhibits inactivation of insect sodium channels (Nav). In vivo, is highly toxic to insects. The sequence is that of U15-ctenitoxin-Co1a from Ctenus ornatus (Brazilian spider).